Consider the following 191-residue polypeptide: MIKCNNKTFNNLLKLTILVNLLISCGLTGATKIRLERSAKDITDEIDAIKKDAALKGVNFDAFKDKKTGSGVSENPFILEAKVRATTVAEKFVIAIEEEATKLKETGSSGEFSAMYDLMFEVSKPLQKLGIQEMTKTVSDAAEENPPTTAQGVLEIAKKMREKLQRVHTKNYCTLKKKENSTFTDEKCKNN.

A signal peptide spans 1-29 (MIKCNNKTFNNLLKLTILVNLLISCGLTG).

Belongs to the decorin-binding protein family.

Its function is as follows. Binds to decorin which may mediate the adherence of B.burgdorferi to collagen fibers in skin and other tissues. The chain is Decorin-binding protein A (dbpA) from Borreliella burgdorferi (strain ATCC 35210 / DSM 4680 / CIP 102532 / B31) (Borrelia burgdorferi).